We begin with the raw amino-acid sequence, 367 residues long: Cycloaraneosene synthase sdnA (367 aa).

A signal peptide spans 1-24 (MSLYGLFTLATSYLPSVGGGAALA). Mg(2+) contacts are provided by Asp115, Asn260, and Ser264. The short motif at 115–119 (DDQFD) is the DDXXD motif element. The N-linked (GlcNAc...) asparagine glycan is linked to Asn276.

This sequence belongs to the terpene synthase family. It depends on Mg(2+) as a cofactor.

The enzyme catalyses (2E,6E,10E)-geranylgeranyl diphosphate = cycloaraneosene + diphosphate. It participates in antibiotic biosynthesis. In terms of biological role, cycloaraneosene synthase; part of the gene cluster that mediates the biosynthesis of sordarin and hypoxysordarin, glycoside antibiotics with a unique tetracyclic diterpene aglycone structure. First, the geranylgeranyl diphosphate synthase sdnC constructs GGDP from farnesyl diphosphate and isopentenyl diphosphate. The diterpene cyclase sdnA then catalyzes the cyclization of GGDP to afford cycloaraneosene. Cycloaraneosene is then hydroxylated four times by the putative cytochrome P450 monooxygenases sdnB, sdnE, sdnF and sdnH to give a hydroxylated cycloaraneosene derivative such as cycloaraneosene-8,9,13,19-tetraol. Although the order of the hydroxylations is unclear, at least C8, C9 and C13 of the cycloaraneosene skeleton are hydroxylated before the sordaricin formation. Dehydration of the 13-hydroxy group of the hydroxylated cycloaraneosene derivative might be catalyzed by an unassigned hypothetical protein such as sdnG and sdnP to construct the cyclopentadiene moiety. The FAD-dependent oxidoreductase sdnN is proposed to catalyze the oxidation at C9 of the hydroxylated cycloaraneosene derivative and also catalyze the Baeyer-Villiger oxidation to give the lactone intermediate. The presumed lactone intermediate would be hydrolyzed to give an acrolein moiety and a carboxylate moiety. Then, [4+2]cycloaddition would occur between the acrolein moiety and the cyclopentadiene moiety to give sordaricin. SdnN might also be involved in the [4+2]cycloaddition after the hypothesized oxidation to accommodate the oxidized product and prompt the [4+2]cycloaddition. GDP-6-deoxy-D-altrose may be biosynthesized from GDP-D-mannose by the putative GDP-mannose-4,6-dehydratase sdnI and the short-chain dehydrogenase sdnK. The glycosyltransferase sdnJ catalyzes the attachment of 6-deoxy-D-altrose onto the 19-hydroxy group of sordaricin to give 4'-O-demethylsordarin. The methyltransferase sdnD would complete the biosynthesis of sordarin. Sordarin can be further modified into hypoxysordarin. The unique acyl chain at the 3'-hydroxy group of hypoxysordarin would be constructed by an iterative type I PKS sdnO and the trans-acting polyketide methyltransferase sdnL. SdnL would be responsible for the introduction of an alpha-methyl group of the polyketide chain. Alternatively, the beta-lactamase-like protein sdnR might be responsible for the cleavage and transfer of the polyketide chain from the PKS sdnO to sordarin. Two putative cytochrome P450 monooxygenases, sdnQ and sdnT, might catalyze the epoxidations of the polyketide chain to complete the biosynthesis of hypoxysordarin. Transcriptional regulators sdnM and sdnS are presumably encoded for the transcriptional regulation of the expression of the sdn gene cluster. This is Cycloaraneosene synthase sdnA from Sordaria araneosa (Pleurage araneosa).